A 303-amino-acid chain; its full sequence is Porphobilinogen deaminase (303 aa).

An S-(dipyrrolylmethanemethyl)cysteine modification is found at Cys-241.

The protein belongs to the HMBS family. Monomer. Requires dipyrromethane as cofactor.

The catalysed reaction is 4 porphobilinogen + H2O = hydroxymethylbilane + 4 NH4(+). The protein operates within porphyrin-containing compound metabolism; protoporphyrin-IX biosynthesis; coproporphyrinogen-III from 5-aminolevulinate: step 2/4. It functions in the pathway porphyrin-containing compound metabolism; chlorophyll biosynthesis. Tetrapolymerization of the monopyrrole PBG into the hydroxymethylbilane pre-uroporphyrinogen in several discrete steps. The chain is Porphobilinogen deaminase from Roseiflexus sp. (strain RS-1).